The primary structure comprises 226 residues: ATP synthase subunit a (226 aa).

5 helical membrane-spanning segments follow: residues 18 to 38, 74 to 94, 100 to 120, 158 to 180, and 197 to 217; these read LSLN…SYWL, FISL…PYIF, LTLT…YGWI, LAVR…GNTG, and IALL…FAVL.

This sequence belongs to the ATPase A chain family. F-type ATPases have 2 components, CF(1) - the catalytic core - and CF(0) - the membrane proton channel. CF(1) has five subunits: alpha(3), beta(3), gamma(1), delta(1), epsilon(1). CF(0) has three main subunits: a, b and c.

Its subcellular location is the mitochondrion inner membrane. Its function is as follows. Mitochondrial membrane ATP synthase (F(1)F(0) ATP synthase or Complex V) produces ATP from ADP in the presence of a proton gradient across the membrane which is generated by electron transport complexes of the respiratory chain. F-type ATPases consist of two structural domains, F(1) - containing the extramembraneous catalytic core and F(0) - containing the membrane proton channel, linked together by a central stalk and a peripheral stalk. During catalysis, ATP synthesis in the catalytic domain of F(1) is coupled via a rotary mechanism of the central stalk subunits to proton translocation. Key component of the proton channel; it may play a direct role in the translocation of protons across the membrane. The protein is ATP synthase subunit a (mt:ATPase6) of Anopheles gambiae (African malaria mosquito).